Reading from the N-terminus, the 177-residue chain is Small ribosomal subunit protein uS5 (177 aa).

An S5 DRBM domain is found at 21–84; sequence LLDRVVKIKR…KQASRSMIHV (64 aa).

It belongs to the universal ribosomal protein uS5 family. Part of the 30S ribosomal subunit. Contacts proteins S4 and S8.

In terms of biological role, with S4 and S12 plays an important role in translational accuracy. Its function is as follows. Located at the back of the 30S subunit body where it stabilizes the conformation of the head with respect to the body. In Rhodopirellula baltica (strain DSM 10527 / NCIMB 13988 / SH1), this protein is Small ribosomal subunit protein uS5.